The sequence spans 307 residues: tRNA pseudouridine synthase B (307 aa).

Catalysis depends on Asp-38, which acts as the Nucleophile.

The protein belongs to the pseudouridine synthase TruB family. Type 1 subfamily.

The catalysed reaction is uridine(55) in tRNA = pseudouridine(55) in tRNA. In terms of biological role, responsible for synthesis of pseudouridine from uracil-55 in the psi GC loop of transfer RNAs. This chain is tRNA pseudouridine synthase B, found in Bacillus cereus (strain ATCC 14579 / DSM 31 / CCUG 7414 / JCM 2152 / NBRC 15305 / NCIMB 9373 / NCTC 2599 / NRRL B-3711).